A 311-amino-acid chain; its full sequence is Ribosomal RNA large subunit methyltransferase F (311 aa).

Belongs to the methyltransferase superfamily. METTL16/RlmF family.

Its subcellular location is the cytoplasm. It catalyses the reaction adenosine(1618) in 23S rRNA + S-adenosyl-L-methionine = N(6)-methyladenosine(1618) in 23S rRNA + S-adenosyl-L-homocysteine + H(+). Specifically methylates the adenine in position 1618 of 23S rRNA. This Pectobacterium carotovorum subsp. carotovorum (strain PC1) protein is Ribosomal RNA large subunit methyltransferase F.